The chain runs to 229 residues: DNA mismatch repair protein MutH (229 aa).

This sequence belongs to the MutH family.

The protein localises to the cytoplasm. In terms of biological role, sequence-specific endonuclease that cleaves unmethylated GATC sequences. It is involved in DNA mismatch repair. The sequence is that of DNA mismatch repair protein MutH from Escherichia coli (strain K12 / MC4100 / BW2952).